The chain runs to 885 residues: MQRVYAFEDGDGTNKKLLGGKGAGLCTMTKIGLPVPQGFVITTEMCKQFIANGNKMPEGLMEEVKKNMQLVEKKSGKVFGGEENPLLVSVRSGAAMSMPGMMDTILNLGLNDKTVVALAKLTNNERFAYDSYRRFVSLFGKIALNVDDEVYDKTLENKKVEKGVKLDTELDANDMKELAQVFIKKTEEFTKQPFPVDPYAQLEFAICAVFRSWMGKRAVDYRREFKITPEQADGTAVSVVSMVYGNMGNDSATGVCFTRDPGTGENMFFGEYLKNAQGEDVVAGIRTPQIISKMAEDADLPGCYEQLLDIRKKLEGYFHEVQDFEFTIERKKLYMLQTRNGKMNATATVRTGVDMVEEGLITKEQAIMRIAPQSVDQLLHKNMPANYAEAPLVKGLPASPGAATGAVVFDADDAVEQAKGKKVLLLREETKPEDIHGFFVAEGILTCRGGKTSHAAVVARGMGKPCVSGAEGIKVDVAKKIAKIGSLEVHEGDILTIDGSTGCVYKGEVPLEEPQVGSGYFGTILKWANEIKKIGVFANADLPSAAKKALEFGAEGIGLCRTERMFNAVERLPIVVKMILSNTLEERKKYLNELMPLQKQDFIGLLKTMNGLPVTVRLLDPPLHEFLPTLEELMREIFEMKLSGKTEGLAEKEVVLKKVKELMEVNPMIGHRGIRLGTTNPEIYEMQIRAFLEATAEVIKEGIKTHAEIMIPNVTEVNELINLRKNVLEPVHEEVEKKYGIKVPFMYGTMVECVRAALTADKIATEASFFSFGTNDLTQGTFSYSREDSENKFIPKYVELKILPANPFEILDRPGVGEVMRIAVTKGRQTRPELLVGICGEHGGEPSSIEWCHMIGLNYVSCSSYRIPVARIAAAQAQIRHPREN.

Positions 1-342 are N-terminal; that stretch reads MQRVYAFEDG…LYMLQTRNGK (342 aa). ATP is bound at residue Arg-91. Positions 343–399 are linker 1; the sequence is MNATATVRTGVDMVEEGLITKEQAIMRIAPQSVDQLLHKNMPANYAEAPLVKGLPAS. Positions 400 to 497 are central; sequence PGAATGAVVF…EVHEGDILTI (98 aa). His-454 functions as the Tele-phosphohistidine intermediate in the catalytic mechanism. Residues 498-533 are linker 2; that stretch reads DGSTGCVYKGEVPLEEPQVGSGYFGTILKWANEIKK. A C-terminal region spans residues 534–885; that stretch reads IGVFANADLP…QAQIRHPREN (352 aa). Positions 561, 617, 752, 773, 774, 775, and 776 each coordinate substrate. Glu-752 is a binding site for Mg(2+). Position 776 (Asp-776) interacts with Mg(2+). Cys-839 functions as the Proton donor in the catalytic mechanism.

It belongs to the PEP-utilizing enzyme family. Homodimer. Mg(2+) serves as cofactor.

The enzyme catalyses pyruvate + phosphate + ATP = phosphoenolpyruvate + AMP + diphosphate + H(+). Its function is as follows. Catalyzes the dephosphorylation of phosphoenolpyruvate and diphosphate to produce ATP. The polypeptide is Pyruvate, phosphate dikinase (Entamoeba histolytica (strain ATCC 30459 / HM-1:IMSS / ABRM)).